The primary structure comprises 399 residues: Odorant receptor 42b (399 aa).

Over 1–45 the chain is Cytoplasmic; that stretch reads MVFELIRPAPLTEQKRSRDGCIYLYRAMKFIGWLPPKQGVLRYVY. Residues 46 to 66 traverse the membrane as a helical segment; the sequence is LTWTLMTFVWCTTYLPLGFLG. Residues 67 to 83 lie on the Extracellular side of the membrane; that stretch reads SYMTQIKSFSPGEFLTS. The chain crosses the membrane as a helical span at residues 84–104; the sequence is LQVCINAYGSSVKVAITYSML. Over 105–140 the chain is Cytoplasmic; sequence WRLIKAKNILDQLDLRCTAMEEREKIHLVVARSNHA. A helical transmembrane segment spans residues 141–161; sequence FLIFTFVYCGYAGSTYLSSVL. Residues 162 to 178 lie on the Extracellular side of the membrane; that stretch reads SGRPPWQLYNPFIDWHD. The chain crosses the membrane as a helical span at residues 179 to 199; that stretch reads GTLKLWVASTLEYMVMSGAVL. At 200–268 the chain is on the cytoplasmic side; that stretch reads QDQLSDSYPL…AIIKPVIQGT (69 aa). Residues 269 to 289 traverse the membrane as a helical segment; sequence IFTQFLLIGLVLGFTLINVFF. At 290-292 the chain is on the extracellular side; that stretch reads FSD. Residues 293–313 form a helical membrane-spanning segment; the sequence is IWTGIASFMFVITILLQTFPF. Residues 314–356 lie on the Cytoplasmic side of the membrane; the sequence is CYTCNLIMEDCESLTHAIFQSNWVDASRRYKTTLLYFLQNVQQ. The chain crosses the membrane as a helical span at residues 357-377; the sequence is PIVFIAGGIFQISMSSNISVA. The Extracellular portion of the chain corresponds to 378–399; sequence KFAFSVITITKQMNIADKFKTD.

It belongs to the insect chemoreceptor superfamily. Heteromeric odorant receptor channel (TC 1.A.69) family. Or2a subfamily. In terms of assembly, interacts with Orco. Complexes exist early in the endomembrane system in olfactory sensory neurons (OSNs), coupling these complexes to the conserved ciliary trafficking pathway. As to expression, expressed in olfactory sensory neurons in the antenna.

It localises to the cell membrane. Functionally, odorant receptor which mediates acceptance or avoidance behavior, depending on its substrates. The odorant receptor repertoire encodes a large collection of odor stimuli that vary widely in identity, intensity, and duration. May form a complex with Orco to form odorant-sensing units, providing sensitive and prolonged odorant signaling and calcium permeability. Involved in the behavioral responses to ethyl acetate and pentyl acetate. This is Odorant receptor 42b (Or42b) from Drosophila melanogaster (Fruit fly).